Consider the following 84-residue polypeptide: Exodeoxyribonuclease 7 small subunit (84 aa).

Belongs to the XseB family. Heterooligomer composed of large and small subunits.

Its subcellular location is the cytoplasm. It catalyses the reaction Exonucleolytic cleavage in either 5'- to 3'- or 3'- to 5'-direction to yield nucleoside 5'-phosphates.. In terms of biological role, bidirectionally degrades single-stranded DNA into large acid-insoluble oligonucleotides, which are then degraded further into small acid-soluble oligonucleotides. In Caulobacter vibrioides (strain ATCC 19089 / CIP 103742 / CB 15) (Caulobacter crescentus), this protein is Exodeoxyribonuclease 7 small subunit.